The sequence spans 125 residues: Small ribosomal subunit protein uS13 (125 aa).

The segment at 91-125 (HRRGLPARGQRTRTNARTRKGKRKTVAGKKKAGKK) is disordered.

It belongs to the universal ribosomal protein uS13 family. As to quaternary structure, part of the 30S ribosomal subunit. Forms a loose heterodimer with protein S19. Forms two bridges to the 50S subunit in the 70S ribosome.

Its function is as follows. Located at the top of the head of the 30S subunit, it contacts several helices of the 16S rRNA. In the 70S ribosome it contacts the 23S rRNA (bridge B1a) and protein L5 of the 50S subunit (bridge B1b), connecting the 2 subunits; these bridges are implicated in subunit movement. Contacts the tRNAs in the A and P-sites. The chain is Small ribosomal subunit protein uS13 from Chloroherpeton thalassium (strain ATCC 35110 / GB-78).